Consider the following 221-residue polypeptide: Large ribosomal subunit protein uL3 (221 aa).

Belongs to the universal ribosomal protein uL3 family. Part of the 50S ribosomal subunit. Forms a cluster with proteins L14 and L19.

Functionally, one of the primary rRNA binding proteins, it binds directly near the 3'-end of the 23S rRNA, where it nucleates assembly of the 50S subunit. This chain is Large ribosomal subunit protein uL3, found in Chlamydia muridarum (strain MoPn / Nigg).